Reading from the N-terminus, the 908-residue chain is Flap endonuclease GEN homolog 1 (908 aa).

An XPG-N domain region spans residues 2 to 96 (GVNDLWQILE…SKRNQSRYGS (95 aa)). Residues aspartate 30, glutamate 75, glutamate 134, glutamate 136, aspartate 155, aspartate 157, and aspartate 208 each contribute to the Mg(2+) site. Positions 122 to 208 (ECLGIPWVQA…VGLAILLGCD (87 aa)) are XPG-I domain. Positions 208–384 (DYLPKGVPGV…LLVLLTHYDM (177 aa)) are 5'-3' exonuclease domain. The segment at 390-464 (GSRNSNQLQP…VYQKQKLEIK (75 aa)) is chromodomain. 2 positions are modified to phosphoserine: serine 801 and serine 802.

It belongs to the XPG/RAD2 endonuclease family. GEN subfamily. Largely monomeric, dimerizes on the Holliday junction and the first nick occurs upon dimerization at the junction. Requires Mg(2+) as cofactor.

It localises to the nucleus. In terms of biological role, endonuclease which resolves Holliday junctions (HJs) by the introduction of symmetrically related cuts across the junction point, to produce nicked duplex products in which the nicks can be readily ligated. Four-way DNA intermediates, also known as Holliday junctions, are formed during homologous recombination and DNA repair, and their resolution is necessary for proper chromosome segregation. Cleaves HJs by a nick and counter-nick mechanism involving dual coordinated incisions that lead to the formation of ligatable nicked duplex products. Cleavage of the first strand is rate limiting, while second strand cleavage is rapid. Largely monomeric, dimerizes on the HJ and the first nick occurs upon dimerization at the junction. Efficiently cleaves both single and double HJs contained within large recombination intermediates. Exhibits a weak sequence preference for incision between two G residues that reside in a T-rich region of DNA. Also has endonuclease activity on 5'-flap and replication fork (RF) DNA substrates. This chain is Flap endonuclease GEN homolog 1 (GEN1), found in Homo sapiens (Human).